A 118-amino-acid chain; its full sequence is uncharacterized protein (118 aa).

The protein to E.coli YeaO.

This is an uncharacterized protein from Mycobacterium bovis (strain ATCC BAA-935 / AF2122/97).